The primary structure comprises 349 residues: Glycerol-3-phosphate dehydrogenase [NAD(+)], cytoplasmic (349 aa).

10–15 (GSGNWG) provides a ligand contact to NAD(+). Lys-120 serves as a coordination point for substrate. An NAD(+)-binding site is contributed by Ala-153. At Ser-154 the chain carries Phosphoserine. The active-site Proton acceptor is the Lys-204. Arg-269 contributes to the NAD(+) binding site. 269–270 (RN) serves as a coordination point for substrate. The residue at position 289 (Lys-289) is an N6-succinyllysine. Residues Lys-296 and Gln-298 each coordinate NAD(+). At Tyr-326 the chain carries Phosphotyrosine.

It belongs to the NAD-dependent glycerol-3-phosphate dehydrogenase family. As to quaternary structure, homodimer.

It is found in the cytoplasm. It catalyses the reaction sn-glycerol 3-phosphate + NAD(+) = dihydroxyacetone phosphate + NADH + H(+). Functionally, has glycerol-3-phosphate dehydrogenase activity. This chain is Glycerol-3-phosphate dehydrogenase [NAD(+)], cytoplasmic, found in Mus musculus (Mouse).